An 808-amino-acid chain; its full sequence is Probable E3 ubiquitin-protein ligase hulA (808 aa).

Residues 1–112 form the C2 domain; sequence MGSNLPAQPN…QMGGDEMLTR (112 aa). Disordered regions lie at residues 134-231 and 275-346; these read NLST…GWER and RRAH…YFVD. Polar residues-rich tracts occupy residues 142-159 and 171-198; these read QANGLHRSNLQSSTSSGL and GPSQLDPTASNPSLNPQRVPSTTRPSST. The span at 199–210 shows a compositional bias: low complexity; sequence VAPVNGAAAPGA. The span at 211–220 shows a compositional bias: polar residues; it reads SRTNLSSFED. The WW 1 domain maps to 223–256; the sequence is GRLPAGWERREDNLGRTYYVDHNTRTTTWTRPSS. Over residues 275 to 288 the composition is skewed to basic and acidic residues; it reads RRAHQSRMLPEDRT. Residues 289–303 are compositionally biased toward polar residues; sequence GASSPNLQENQQAQT. Over residues 317–326 the composition is skewed to low complexity; the sequence is ATGATTAGTG. 2 WW domains span residues 326-359 and 386-419; these read GELPPGWEQRTTPEGRPYFVDHNTRTTTWVDPRR and GPLPSGWEMRLTNTARVYFVDHNTKTTTWDDPRL. In terms of domain architecture, HECT spans 475-808; it reads SASDLKKRLM…VEETLGFGQE (334 aa). C776 (glycyl thioester intermediate) is an active-site residue.

The protein belongs to the RSP5/NEDD4 family. As to quaternary structure, interacts with creD.

It localises to the cytoplasm. It carries out the reaction S-ubiquitinyl-[E2 ubiquitin-conjugating enzyme]-L-cysteine + [acceptor protein]-L-lysine = [E2 ubiquitin-conjugating enzyme]-L-cysteine + N(6)-ubiquitinyl-[acceptor protein]-L-lysine.. It participates in protein modification; protein ubiquitination. E3 ubiquitin-protein ligase which accepts ubiquitin from an E2 ubiquitin-conjugating enzyme in the form of a thioester and then directly transfers the ubiquitin to targeted substrates. Probably involved in the regulatory network controlling carbon source utilization. The polypeptide is Probable E3 ubiquitin-protein ligase hulA (hulA) (Aspergillus terreus (strain NIH 2624 / FGSC A1156)).